Here is a 310-residue protein sequence, read N- to C-terminus: Carbamate kinase-like protein YqeA (310 aa).

Belongs to the carbamate kinase family.

The chain is Carbamate kinase-like protein YqeA (yqeA) from Escherichia coli (strain K12).